A 156-amino-acid polypeptide reads, in one-letter code: uncharacterized protein (156 aa).

One can recognise an N-acetyltransferase domain in the interval 1-145 (MIIRKFSSKD…DAILMIKKKP (145 aa)).

It belongs to the acetyltransferase family.

The protein localises to the cytoplasm. This is an uncharacterized protein from Methanocaldococcus jannaschii (strain ATCC 43067 / DSM 2661 / JAL-1 / JCM 10045 / NBRC 100440) (Methanococcus jannaschii).